Reading from the N-terminus, the 212-residue chain is Ribosomal RNA small subunit methyltransferase G (212 aa).

S-adenosyl-L-methionine is bound by residues glycine 80, leucine 85, alanine 131 to glutamate 132, and arginine 146.

It belongs to the methyltransferase superfamily. RNA methyltransferase RsmG family.

Its subcellular location is the cytoplasm. It carries out the reaction guanosine(527) in 16S rRNA + S-adenosyl-L-methionine = N(7)-methylguanosine(527) in 16S rRNA + S-adenosyl-L-homocysteine. Its function is as follows. Specifically methylates the N7 position of guanine in position 527 of 16S rRNA. This is Ribosomal RNA small subunit methyltransferase G from Stenotrophomonas maltophilia (strain K279a).